The following is a 331-amino-acid chain: Leucine-rich repeat-containing protein 26 (331 aa).

The signal sequence occupies residues 1–26; sequence MRGSFFSRLPPQLSLLLLLSLRRVWT. The Extracellular segment spans residues 27–261; it reads QEDIGTAPSK…QCTQSLAARD (235 aa). Positions 34-71 constitute an LRRNT domain; the sequence is PSKSPVAPECPEACSCSLGGKANCSALALPAVPADLSW. 2 disulfide bridges follow: Cys-43-Cys-49 and Cys-47-Cys-57. LRR repeat units follow at residues 72–93, 96–117, 120–141, 144–165, and 168–191; these read QVRS…AFAN, ALLY…AFWG, VLQW…TFAP, ALSF…ILGP, and LLRV…NNLP. Positions 201-255 constitute an LRRCT domain; sequence NPWTCNCALRPLCTWLRKHPRPASETETLLCVSPRLQTLSLLTAFPDAAFKQCTQ. 2 cysteine pairs are disulfide-bonded: Cys-205/Cys-231 and Cys-207/Cys-253. A helical membrane pass occupies residues 262–282; sequence LAVVYALGPVSFLASLAICLA. Residues 283–331 lie on the Cytoplasmic side of the membrane; it reads LGSVLTACGARRRRRRRTTVRHLLRRQLDPEGPPSLEDAGSPVTAAIQA. The segment at 310-331 is disordered; it reads LDPEGPPSLEDAGSPVTAAIQA.

In terms of assembly, interacts with KCNMA1.

The protein localises to the cell membrane. It localises to the cytoplasm. It is found in the cytoskeleton. Auxiliary protein of the large-conductance, voltage and calcium-activated potassium channel (BK alpha). Required for the conversion of BK alpha channels from a high-voltage to a low-voltage activated channel type in non-excitable cells. These are characterized by negative membrane voltages and constant low levels of calcium. The protein is Leucine-rich repeat-containing protein 26 (Lrrc26) of Mus musculus (Mouse).